Reading from the N-terminus, the 78-residue chain is Large ribosomal subunit protein bL28 (78 aa).

The interval 1-28 is disordered; the sequence is MSAICQVTGRQPGYGKSVSHSHRRTSRR.

It belongs to the bacterial ribosomal protein bL28 family.

This is Large ribosomal subunit protein bL28 from Corynebacterium diphtheriae (strain ATCC 700971 / NCTC 13129 / Biotype gravis).